The chain runs to 170 residues: Photosystem II extrinsic protein V (170 aa).

Residues 1-33 (MASVFSSLRRSLKGLLVLIPVLIGLAVTSPAQA) form the signal peptide. Residues C70, C73, H74, and H125 each coordinate heme c.

Belongs to the cytochrome c family. PsbV subfamily. In terms of assembly, PSII is composed of 1 copy each of membrane proteins PsbA, PsbB, PsbC, PsbD, PsbE, PsbF, PsbH, PsbI, PsbJ, PsbK, PsbL, PsbM, PsbT, PsbX, PsbY, PsbZ, Psb30/Ycf12, peripheral proteins PsbO, CyanoQ (PsbQ), PsbU, PsbV and a large number of cofactors. It forms dimeric complexes. The cofactor is heme c.

The protein resides in the cellular thylakoid membrane. Functionally, one of the extrinsic, lumenal subunits of photosystem II (PSII). PSII is a light-driven water plastoquinone oxidoreductase, using light energy to abstract electrons from H(2)O, generating a proton gradient subsequently used for ATP formation. The extrinsic proteins stabilize the structure of photosystem II oxygen-evolving complex (OEC), the ion environment of oxygen evolution and protect the OEC against heat-induced inactivation. Low-potential cytochrome c that plays a role in the OEC of PSII. The protein is Photosystem II extrinsic protein V of Synechococcus sp. (strain CC9605).